Reading from the N-terminus, the 359-residue chain is Cytochrome c oxidase subunit 2 (359 aa).

The N-terminal stretch at 1–28 is a signal peptide; that stretch reads MEQQNKRGLKRKALLGGVLGSGGLAMAG. Cys-29 is lipidated: N-palmitoyl cysteine. A lipid anchor (S-diacylglycerol cysteine) is attached at Cys-29. 2 helical membrane-spanning segments follow: residues 64–84 and 107–127; these read VWVA…TAIF and VPLE…LFFF. Residues His-244, Cys-285, Glu-287, Cys-289, His-293, and Met-296 each coordinate Cu cation. A disordered region spans residues 338-359; the sequence is STAPFVSDRTGTRDGENFQTPA.

The protein belongs to the cytochrome c oxidase subunit 2 family. In terms of assembly, associates with subunits I, III and IV to form cytochrome c oxidase. The cofactor is binuclear copper center (CuA).

It is found in the cell membrane. The enzyme catalyses 4 Fe(II)-[cytochrome c] + O2 + 8 H(+)(in) = 4 Fe(III)-[cytochrome c] + 2 H2O + 4 H(+)(out). In terms of biological role, subunits I and II form the functional core of the enzyme complex. Electrons originating in cytochrome c are transferred via heme a and Cu(A) to the binuclear center formed by heme a3 and Cu(B). The chain is Cytochrome c oxidase subunit 2 (ctaC) from Corynebacterium efficiens (strain DSM 44549 / YS-314 / AJ 12310 / JCM 11189 / NBRC 100395).